Reading from the N-terminus, the 306-residue chain is Mitochondrial substrate carrier family protein M (306 aa).

Residues 1 to 10 are Mitochondrial intermembrane-facing; it reads MRYILNNNVE. 3 Solcar repeats span residues 5–98, 108–195, and 207–299; these read LNNN…YKNI, LNTF…IKFY, and LNAS…IKKS. The chain crosses the membrane as a helical span at residues 11–31; sequence GTSALLGSTVATAFLQPFDFL. Residues 32–72 lie on the Mitochondrial matrix side of the membrane; sequence KIRLQGSGFASGGDLNKFKRVGVIDTCKNVLKNEGIKQFWR. A helical membrane pass occupies residues 73–89; it reads GSSPTIVASGIAWGTYM. Over 90-113 the chain is Mitochondrial intermembrane; the sequence is HFYEAYKNILKSKYNVTQLNTFDH. A helical transmembrane segment spans residues 114–134; that stretch reads FICAVGASATQVFITNPIFLI. Topologically, residues 135-163 are mitochondrial matrix; the sequence is KTRMQLQTPGSANYYTGIFDGIKKTVKVE. A helical membrane pass occupies residues 164–184; the sequence is GFKGLYKGVIPSLWLTFHGGI. The Mitochondrial intermembrane portion of the chain corresponds to 185–211; sequence QMSSYEHIKFYFSSNSGKSLDSLNASE. Residues 212–232 traverse the membrane as a helical segment; sequence IFIASSISKFLASTILYPFQV. Residues 233-278 are Mitochondrial matrix-facing; the sequence is VKTRLQDERNIPNQNNVRVYNGTKDVIFKILKNEGIIGFYRGLVPN. The helical transmembrane segment at 279–296 threads the bilayer; it reads TLKVIPNTSITLLLYEEI. Residues 297 to 306 lie on the Mitochondrial intermembrane side of the membrane; the sequence is KKSFNYIINE.

The protein belongs to the mitochondrial carrier (TC 2.A.29) family.

Its subcellular location is the mitochondrion inner membrane. Functionally, mitochondrial solute carriers shuttle metabolites, nucleotides, and cofactors through the mitochondrial inner membrane. Transports folate across the inner membranes of mitochondria. This Dictyostelium discoideum (Social amoeba) protein is Mitochondrial substrate carrier family protein M (mcfM).